A 262-amino-acid polypeptide reads, in one-letter code: Pyridoxine 5'-phosphate synthase (262 aa).

Asparagine 6 is a 3-amino-2-oxopropyl phosphate binding site. A 1-deoxy-D-xylulose 5-phosphate-binding site is contributed by 8–9; the sequence is DH. Arginine 17 provides a ligand contact to 3-amino-2-oxopropyl phosphate. Histidine 43 serves as the catalytic Proton acceptor. 1-deoxy-D-xylulose 5-phosphate-binding residues include arginine 45 and histidine 50. Glutamate 70 (proton acceptor) is an active-site residue. A 1-deoxy-D-xylulose 5-phosphate-binding site is contributed by threonine 102. The Proton donor role is filled by histidine 215. 3-amino-2-oxopropyl phosphate contacts are provided by residues glycine 216 and 237–238; that span reads GH.

Belongs to the PNP synthase family. As to quaternary structure, homooctamer; tetramer of dimers.

Its subcellular location is the cytoplasm. The catalysed reaction is 3-amino-2-oxopropyl phosphate + 1-deoxy-D-xylulose 5-phosphate = pyridoxine 5'-phosphate + phosphate + 2 H2O + H(+). It functions in the pathway cofactor biosynthesis; pyridoxine 5'-phosphate biosynthesis; pyridoxine 5'-phosphate from D-erythrose 4-phosphate: step 5/5. Catalyzes the complicated ring closure reaction between the two acyclic compounds 1-deoxy-D-xylulose-5-phosphate (DXP) and 3-amino-2-oxopropyl phosphate (1-amino-acetone-3-phosphate or AAP) to form pyridoxine 5'-phosphate (PNP) and inorganic phosphate. This is Pyridoxine 5'-phosphate synthase from Helicobacter pylori (strain HPAG1).